The sequence spans 422 residues: L-threonine dehydratase biosynthetic IlvA (422 aa).

Lys56 carries the post-translational modification N6-(pyridoxal phosphate)lysine. Pyridoxal 5'-phosphate is bound by residues Asn83, 189–193 (GGGGL), and Ser315. Residues 339-413 (HYFILNFPQR…FDPSNIYINE (75 aa)) form the ACT-like domain.

This sequence belongs to the serine/threonine dehydratase family. As to quaternary structure, homotetramer. Pyridoxal 5'-phosphate serves as cofactor.

The enzyme catalyses L-threonine = 2-oxobutanoate + NH4(+). It functions in the pathway amino-acid biosynthesis; L-isoleucine biosynthesis; 2-oxobutanoate from L-threonine: step 1/1. Functionally, catalyzes the anaerobic formation of alpha-ketobutyrate and ammonia from threonine in a two-step reaction. The first step involved a dehydration of threonine and a production of enamine intermediates (aminocrotonate), which tautomerizes to its imine form (iminobutyrate). Both intermediates are unstable and short-lived. The second step is the nonenzymatic hydrolysis of the enamine/imine intermediates to form 2-ketobutyrate and free ammonia. In the low water environment of the cell, the second step is accelerated by RidA. The protein is L-threonine dehydratase biosynthetic IlvA (ilvA) of Staphylococcus aureus (strain MSSA476).